The sequence spans 639 residues: Chaperone protein DnaK (639 aa).

A Phosphothreonine; by autocatalysis modification is found at T198. Positions 601–639 (AQQAPGADSCGGDCGQQQEAGAKPKDEKVVDADFEEVKK) are disordered. Residues 622–639 (AKPKDEKVVDADFEEVKK) are compositionally biased toward basic and acidic residues.

It belongs to the heat shock protein 70 family.

Its function is as follows. Acts as a chaperone. This Trichlorobacter lovleyi (strain ATCC BAA-1151 / DSM 17278 / SZ) (Geobacter lovleyi) protein is Chaperone protein DnaK.